A 182-amino-acid chain; its full sequence is Probable peptidyl-prolyl cis-trans isomerase A (182 aa).

Positions 13 to 181 (ATATATLHTN…DPVVIESITI (169 aa)) constitute a PPIase cyclophilin-type domain.

This sequence belongs to the cyclophilin-type PPIase family.

It localises to the cytoplasm. The enzyme catalyses [protein]-peptidylproline (omega=180) = [protein]-peptidylproline (omega=0). In terms of biological role, PPIases accelerate the folding of proteins. It catalyzes the cis-trans isomerization of proline imidic peptide bonds in oligopeptides. This chain is Probable peptidyl-prolyl cis-trans isomerase A (ppiA), found in Mycobacterium bovis (strain ATCC BAA-935 / AF2122/97).